Consider the following 53-residue polypeptide: UPF0391 membrane protein Bcen2424_6479 (53 aa).

Transmembrane regions (helical) follow at residues 5–25 (AIIF…GIAA) and 30–50 (IAKI…LLGV).

The protein belongs to the UPF0391 family.

It localises to the cell membrane. This Burkholderia cenocepacia (strain HI2424) protein is UPF0391 membrane protein Bcen2424_6479.